Here is a 93-residue protein sequence, read N- to C-terminus: Small ribosomal subunit protein uS19c (93 aa).

It belongs to the universal ribosomal protein uS19 family.

The protein localises to the plastid. Its subcellular location is the chloroplast. Protein S19 forms a complex with S13 that binds strongly to the 16S ribosomal RNA. The sequence is that of Small ribosomal subunit protein uS19c (rps19-A) from Zea mays (Maize).